Consider the following 361-residue polypeptide: Eukaryotic translation initiation factor 3 subunit F (361 aa).

The disordered stretch occupies residues 1-86; sequence MATPAVPVSA…PAPALPGPAL (86 aa). A2 is modified (N-acetylalanine). Pro residues-rich tracts occupy residues 9 to 20 and 30 to 40; these read SAPPATPAPVPA and VPAPTPAPAAA. Positions 41–78 are enriched in low complexity; that stretch reads PVPAAAPASSSDPAAAAATTAAPGQTPASAQAPAQTPA. Residue S50 is modified to Phosphoserine; by CDK11; in vitro. In terms of domain architecture, MPN spans 96 to 226; sequence VRLHPVILAS…IKAYVSTLMG (131 aa). K242 is modified (N6-acetyllysine). S262 is subject to Phosphoserine.

Belongs to the eIF-3 subunit F family. As to quaternary structure, component of the eukaryotic translation initiation factor 3 (eIF-3) complex, which is composed of 13 subunits: EIF3A, EIF3B, EIF3C, EIF3D, EIF3E, EIF3F, EIF3G, EIF3H, EIF3I, EIF3J, EIF3K, EIF3L and EIF3M. The eIF-3 complex appears to include 3 stable modules: module A is composed of EIF3A, EIF3B, EIF3G and EIF3I; module B is composed of EIF3F, EIF3H, and EIF3M; and module C is composed of EIF3C, EIF3D, EIF3E, EIF3K and EIF3L. EIF3C of module C binds EIF3B of module A and EIF3H of module B, thereby linking the three modules. EIF3J is a labile subunit that binds to the eIF-3 complex via EIF3B. The eIF-3 complex interacts with RPS6KB1 under conditions of nutrient depletion. Mitogenic stimulation leads to binding and activation of a complex composed of MTOR and RPTOR, leading to phosphorylation and release of RPS6KB1 and binding of EIF4B to eIF-3. Interacts with RNF139; the interaction leads to protein translation inhibitions in a ubiquitination-dependent manner. Interacts with DTX1, the interaction is required for deubiquitinating activity towards NOTCH1. Post-translationally, phosphorylation is enhanced upon serum stimulation. Phosphorylated during apoptosis by caspase-processed CDK11.

Its subcellular location is the cytoplasm. The catalysed reaction is Thiol-dependent hydrolysis of ester, thioester, amide, peptide and isopeptide bonds formed by the C-terminal Gly of ubiquitin (a 76-residue protein attached to proteins as an intracellular targeting signal).. In terms of biological role, component of the eukaryotic translation initiation factor 3 (eIF-3) complex, which is required for several steps in the initiation of protein synthesis. The eIF-3 complex associates with the 40S ribosome and facilitates the recruitment of eIF-1, eIF-1A, eIF-2:GTP:methionyl-tRNAi and eIF-5 to form the 43S pre-initiation complex (43S PIC). The eIF-3 complex stimulates mRNA recruitment to the 43S PIC and scanning of the mRNA for AUG recognition. The eIF-3 complex is also required for disassembly and recycling of post-termination ribosomal complexes and subsequently prevents premature joining of the 40S and 60S ribosomal subunits prior to initiation. The eIF-3 complex specifically targets and initiates translation of a subset of mRNAs involved in cell proliferation, including cell cycling, differentiation and apoptosis, and uses different modes of RNA stem-loop binding to exert either translational activation or repression. Deubiquitinates activated NOTCH1, promoting its nuclear import, thereby acting as a positive regulator of Notch signaling. The protein is Eukaryotic translation initiation factor 3 subunit F of Pan troglodytes (Chimpanzee).